Reading from the N-terminus, the 1188-residue chain is Probable phosphoenolpyruvate synthase (1188 aa).

Residues 536–670 (LGGAVLSDGH…LIVGLYRLGI (135 aa)) form the DOD-type homing endonuclease domain. H824 serves as the catalytic Tele-phosphohistidine intermediate. Substrate is bound by residues R917, R964, E1061, G1083, T1084, N1085, and D1086. Mg(2+) is bound at residue E1061. A Mg(2+)-binding site is contributed by D1086. Residue C1133 is the Proton donor of the active site.

It belongs to the PEP-utilizing enzyme family. Requires Mg(2+) as cofactor. This protein undergoes a protein self splicing that involves a post-translational excision of the intervening region (intein) followed by peptide ligation.

It catalyses the reaction pyruvate + ATP + H2O = phosphoenolpyruvate + AMP + phosphate + 2 H(+). It participates in carbohydrate biosynthesis; gluconeogenesis. Catalyzes the phosphorylation of pyruvate to phosphoenolpyruvate. This chain is Probable phosphoenolpyruvate synthase (ppsA), found in Methanocaldococcus jannaschii (strain ATCC 43067 / DSM 2661 / JAL-1 / JCM 10045 / NBRC 100440) (Methanococcus jannaschii).